The sequence spans 541 residues: Pheromone B beta 1 receptor (541 aa).

At methionine 1–proline 3 the chain is on the extracellular side. Residues glutamate 4 to tryptophan 24 form a helical membrane-spanning segment. Over arginine 25–serine 33 the chain is Cytoplasmic. Residues isoleucine 34–glycine 54 traverse the membrane as a helical segment. Topologically, residues serine 55–lysine 69 are extracellular. A helical transmembrane segment spans residues leucine 70–glutamate 90. Over arginine 91 to threonine 109 the chain is Cytoplasmic. Residues isoleucine 110–valine 130 form a helical membrane-spanning segment. Topologically, residues glutamine 131–serine 150 are extracellular. Residues isoleucine 151–tyrosine 171 form a helical membrane-spanning segment. Residues alanine 172–leucine 205 are Cytoplasmic-facing. The chain crosses the membrane as a helical span at residues isoleucine 206–phenylalanine 226. Residues serine 227–glycine 264 are Extracellular-facing. The helical transmembrane segment at alanine 265–phenylalanine 285 threads the bilayer. At glycine 286 to arginine 541 the chain is on the cytoplasmic side. Disordered stretches follow at residues threonine 364–serine 393 and tyrosine 414–arginine 541. Pro residues predominate over residues methionine 372–glutamine 385. Over residues proline 420–threonine 429 the composition is skewed to low complexity. 2 stretches are compositionally biased toward pro residues: residues isoleucine 467 to histidine 478 and serine 493 to proline 502.

Belongs to the G-protein coupled receptor 4 family.

The protein localises to the membrane. In terms of biological role, receptor for the BBP1 pheromone, a prenylated mating factor. The protein is Pheromone B beta 1 receptor (BBR1) of Schizophyllum commune (Split gill fungus).